Here is a 588-residue protein sequence, read N- to C-terminus: L-fucose isomerase (588 aa).

Active-site proton acceptor residues include Glu-335 and Asp-359. Mn(2+)-binding residues include Glu-335, Asp-359, and His-525.

This sequence belongs to the L-fucose isomerase family. Requires Mn(2+) as cofactor.

The protein localises to the cytoplasm. It catalyses the reaction L-fucose = L-fuculose. The protein operates within carbohydrate degradation; L-fucose degradation; L-lactaldehyde and glycerone phosphate from L-fucose: step 1/3. Functionally, converts the aldose L-fucose into the corresponding ketose L-fuculose. The sequence is that of L-fucose isomerase from Streptococcus pneumoniae serotype 2 (strain D39 / NCTC 7466).